The sequence spans 59 residues: Large ribosomal subunit protein uL30 (59 aa).

The protein belongs to the universal ribosomal protein uL30 family. Part of the 50S ribosomal subunit.

The chain is Large ribosomal subunit protein uL30 from Aliivibrio fischeri (strain MJ11) (Vibrio fischeri).